Consider the following 461-residue polypeptide: METLFNGTLALAGRDQETTGFAWWAGNARLINLSGKLLGAHVAHAGLIVFWAGAMNLFEVAHFVPEKPMYEQGLILLPHLATLGWGVGPGGEVIDTFPYFVSGVLHLISSAVLGFGGIYHALLGPETLEESFPFFGYVWKDRNKMTTILGIHLILLGIGAFLLVLKALYFGGVYDTWAPGGGDVRKITNLTLSPSVIFGYLLKSPFGGEGWIVSVDDLEDIIGGHVWLGSICILGGIWHILTKPFAWARRALVWSGEAYLSYSLGALSVFGFIACCFVWFNNTAYPSEFYGPTGPEASQAQAFTFLVRDQRLGANVGSAQGPTGLGKYLMRSPTGEVIFGGETMRFWDLRAPWLEPLRGPNGLDLSRLKKDIQPWQERRSAEYMTHAPLGSLNSVGGVATEINAVNYVSPRSWLATSHFVLGFFLFVGHLWHAGRARAAAAGFEKGIDRDFEPVLSMTPLN.

The propeptide occupies 1–2; the sequence is ME. T3 carries the N-acetylthreonine modification. T3 carries the post-translational modification Phosphothreonine. Transmembrane regions (helical) follow at residues 57–81, 122–143, 166–188, 243–263, and 279–300; these read LFEV…PHLA, LLGP…KDRN, KALY…RKIT, KPFA…LSYS, and WFNN…ASQA. E355 provides a ligand contact to [CaMn4O5] cluster. Residues 435–459 traverse the membrane as a helical segment; it reads RARAAAAGFEKGIDRDFEPVLSMTP.

It belongs to the PsbB/PsbC family. PsbC subfamily. In terms of assembly, PSII is composed of 1 copy each of membrane proteins PsbA, PsbB, PsbC, PsbD, PsbE, PsbF, PsbH, PsbI, PsbJ, PsbK, PsbL, PsbM, PsbT, PsbX, PsbY, PsbZ, Psb30/Ycf12, at least 3 peripheral proteins of the oxygen-evolving complex and a large number of cofactors. It forms dimeric complexes. Binds multiple chlorophylls and provides some of the ligands for the Ca-4Mn-5O cluster of the oxygen-evolving complex. It may also provide a ligand for a Cl- that is required for oxygen evolution. PSII binds additional chlorophylls, carotenoids and specific lipids. is required as a cofactor.

Its subcellular location is the plastid. It localises to the chloroplast thylakoid membrane. Its function is as follows. One of the components of the core complex of photosystem II (PSII). It binds chlorophyll and helps catalyze the primary light-induced photochemical processes of PSII. PSII is a light-driven water:plastoquinone oxidoreductase, using light energy to abstract electrons from H(2)O, generating O(2) and a proton gradient subsequently used for ATP formation. This chain is Photosystem II CP43 reaction center protein, found in Platanus occidentalis (Sycamore).